Reading from the N-terminus, the 181-residue chain is MAAAREAEKKEEGQKQVKLYAIIRIRGRVDVHPDVEYTLKLLRLHRKFHLVLYPSTLPGIERMIHKVKDWVTWGEIDRDTLVELLRRRGRISGNKPLTDEYVQEKLGLKGGIEELADKLLKGEIMLHKLYDKQKKIWIIKPVFRLHPPRGGFKGSIKKPYGAGGELGYRGPAINELIRRML.

The protein belongs to the universal ribosomal protein uL30 family. In terms of assembly, part of the 50S ribosomal subunit.

This Hyperthermus butylicus (strain DSM 5456 / JCM 9403 / PLM1-5) protein is Large ribosomal subunit protein uL30.